Reading from the N-terminus, the 212-residue chain is Fibroblast growth factor 8b (212 aa).

Positions 1-27 are cleaved as a signal peptide; the sequence is MRLKSSRLGYLFLQFMTLCFYTQMTMQ. The N-linked (GlcNAc...) asparagine glycan is linked to N139.

It belongs to the heparin-binding growth factors family.

Its subcellular location is the secreted. Its function is as follows. May act as signaling molecule during development of the midbrain-hindbrain boundary (MHB) organizer, and be involved in patterning of the nervous system. In Danio rerio (Zebrafish), this protein is Fibroblast growth factor 8b (fgf8b).